We begin with the raw amino-acid sequence, 75 residues long: Large ribosomal subunit protein bL31 (75 aa).

Belongs to the bacterial ribosomal protein bL31 family. Type A subfamily. Part of the 50S ribosomal subunit.

Functionally, binds the 23S rRNA. The protein is Large ribosomal subunit protein bL31 of Bradyrhizobium diazoefficiens (strain JCM 10833 / BCRC 13528 / IAM 13628 / NBRC 14792 / USDA 110).